Reading from the N-terminus, the 337-residue chain is Tryptophan--tRNA ligase (337 aa).

ATP-binding positions include 11 to 13 (QPT) and 19 to 20 (GN). The 'HIGH' region signature appears at 12–20 (PTGNLHLGN). D135 is an L-tryptophan binding site. ATP contacts are provided by residues 147–149 (GED), V190, and 199–203 (KMSKS). The 'KMSKS' region signature appears at 199-203 (KMSKS).

Belongs to the class-I aminoacyl-tRNA synthetase family. In terms of assembly, homodimer.

The protein localises to the cytoplasm. The enzyme catalyses tRNA(Trp) + L-tryptophan + ATP = L-tryptophyl-tRNA(Trp) + AMP + diphosphate + H(+). Its function is as follows. Catalyzes the attachment of tryptophan to tRNA(Trp). This Synechocystis sp. (strain ATCC 27184 / PCC 6803 / Kazusa) protein is Tryptophan--tRNA ligase.